We begin with the raw amino-acid sequence, 365 residues long: S-adenosylmethionine:tRNA ribosyltransferase-isomerase (365 aa).

The protein belongs to the QueA family. Monomer.

It is found in the cytoplasm. It carries out the reaction 7-aminomethyl-7-carbaguanosine(34) in tRNA + S-adenosyl-L-methionine = epoxyqueuosine(34) in tRNA + adenine + L-methionine + 2 H(+). Its pathway is tRNA modification; tRNA-queuosine biosynthesis. In terms of biological role, transfers and isomerizes the ribose moiety from AdoMet to the 7-aminomethyl group of 7-deazaguanine (preQ1-tRNA) to give epoxyqueuosine (oQ-tRNA). The protein is S-adenosylmethionine:tRNA ribosyltransferase-isomerase of Helicobacter hepaticus (strain ATCC 51449 / 3B1).